The primary structure comprises 398 residues: Mitogen-activated protein kinase 1 (398 aa).

The segment at 1-26 (MDAGAQPPDTEMAEAGGGQQPPAAAA) is disordered. Positions 67–352 (KPPILPIGKG…VEGALAHPYL (286 aa)) constitute a Protein kinase domain. ATP is bound by residues 73–81 (IGKGAYGIV) and Lys96. Residue Asp193 is the Proton acceptor of the active site. At Thr225 the chain carries Phosphothreonine. The short motif at 225–227 (TEY) is the TXY element. The residue at position 227 (Tyr227) is a Phosphotyrosine.

The protein belongs to the protein kinase superfamily. CMGC Ser/Thr protein kinase family. MAP kinase subfamily. As to quaternary structure, may interact with RAC1. In terms of processing, dually phosphorylated on Thr-225 and Tyr-227, which activates the enzyme.

The catalysed reaction is L-seryl-[protein] + ATP = O-phospho-L-seryl-[protein] + ADP + H(+). It carries out the reaction L-threonyl-[protein] + ATP = O-phospho-L-threonyl-[protein] + ADP + H(+). With respect to regulation, activated by threonine and tyrosine phosphorylation. Activated in response to sphingolipid elicitor (SE). Involved in sphingolipid elicitor (SE)-dependent defense signaling pathway. Acts downstream of heterotrimeric G protein alpha subunit and small GTPase RAC1. May regulate the expression of various genes involved in biotic and abiotic stress response. Involved in an abscisic acid signaling pathway that regulates the activities of antioxidant enzymes and the production of hydrogen peroxide. Acts downstream of CCAMK. In Oryza sativa subsp. japonica (Rice), this protein is Mitogen-activated protein kinase 1 (MPK1).